The sequence spans 228 residues: MTARRAPAVNRDVLERMLVDGAASLDVALSDTQRNRLLDYVALLGKWNAVYNLTAIRDPQQMLIQHILDSLSIVPHLRGRASARVLDVGSGGGLPGLVLAIVEPDWQVTLNDIVQKKSAFQTQTRAELKLTNLSVVTGRVETLRPGVEVPEKFDIIVSRAFADLSDFVKLARHLVAPGGSIWAMKGVHPDDEIARLPEGSRVKQTMRLAVPMLDAERHLIEVAVDEAI.

S-adenosyl-L-methionine contacts are provided by residues Gly-89, Leu-94, 140–141 (VE), and Arg-159.

Belongs to the methyltransferase superfamily. RNA methyltransferase RsmG family.

It is found in the cytoplasm. It catalyses the reaction guanosine(527) in 16S rRNA + S-adenosyl-L-methionine = N(7)-methylguanosine(527) in 16S rRNA + S-adenosyl-L-homocysteine. In terms of biological role, specifically methylates the N7 position of guanine in position 527 of 16S rRNA. The chain is Ribosomal RNA small subunit methyltransferase G from Burkholderia multivorans (strain ATCC 17616 / 249).